Reading from the N-terminus, the 334-residue chain is tRNA methyltransferase 10 homolog A (334 aa).

Disordered regions lie at residues methionine 1–arginine 101 and proline 290–serine 334. The span at histidine 26–proline 40 shows a compositional bias: polar residues. Positions lysine 62 to isoleucine 94 form a coiled coil. The span at arginine 71–leucine 84 shows a compositional bias: basic residues. Basic and acidic residues predominate over residues glutamate 85–serine 98. An SAM-dependent MTase TRM10-type domain is found at serine 98 to isoleucine 289. Acidic residues predominate over residues glutamine 305–isoleucine 317.

The protein belongs to the class IV-like SAM-binding methyltransferase superfamily. TRM10 family.

It carries out the reaction guanosine(9) in tRNA + S-adenosyl-L-methionine = N(1)-methylguanosine(9) in tRNA + S-adenosyl-L-homocysteine + H(+). S-adenosyl-L-methionine-dependent guanine N(1)-methyltransferase that catalyzes the formation of N(1)-methylguanine at position 9 (m1G9) in tRNAs. Probably not able to catalyze formation of N(1)-methyladenine at position 9 (m1A9) in tRNAs. The polypeptide is tRNA methyltransferase 10 homolog A (trmt10a) (Xenopus tropicalis (Western clawed frog)).